The primary structure comprises 417 residues: NADH-quinone oxidoreductase subunit D (417 aa).

Belongs to the complex I 49 kDa subunit family. As to quaternary structure, NDH-1 is composed of 14 different subunits. Subunits NuoB, C, D, E, F, and G constitute the peripheral sector of the complex.

Its subcellular location is the cell inner membrane. It carries out the reaction a quinone + NADH + 5 H(+)(in) = a quinol + NAD(+) + 4 H(+)(out). Functionally, NDH-1 shuttles electrons from NADH, via FMN and iron-sulfur (Fe-S) centers, to quinones in the respiratory chain. The immediate electron acceptor for the enzyme in this species is believed to be ubiquinone. Couples the redox reaction to proton translocation (for every two electrons transferred, four hydrogen ions are translocated across the cytoplasmic membrane), and thus conserves the redox energy in a proton gradient. This Ralstonia pickettii (strain 12J) protein is NADH-quinone oxidoreductase subunit D.